Reading from the N-terminus, the 118-residue chain is Endoribonuclease MazF9 (118 aa).

This sequence belongs to the PemK/MazF family. Forms a complex with cognate antitoxin MazE9.

Toxic component of a type II toxin-antitoxin (TA) system. Upon expression in E.coli and M.smegmatis inhibits cell growth and colony formation. Its toxic effect is neutralized by coexpression with cognate antitoxin MazE9. Acts as an mRNA interferase, specifically cleaving between U and C in UAC sequences. May cleave its cognate antitoxin's gene. In E.coli expression with non-cognate antitoxins VapB27 and VapB40 partially neutralizes the toxin. The protein is Endoribonuclease MazF9 (mazF9) of Mycobacterium tuberculosis (strain ATCC 25618 / H37Rv).